The sequence spans 588 residues: NADP-dependent malic enzyme 2 (588 aa).

The tract at residues 1–21 is disordered; sequence MGSTPTDLPGEDVADNRSGVG. An N-acetylglycine modification is found at G2. The active-site Proton donor is Y136. R189 serves as a coordination point for NADP(+). Catalysis depends on K207, which acts as the Proton acceptor. A divalent metal cation contacts are provided by E279, D280, and D303. NADP(+) contacts are provided by residues D303, 332-348, and N444; that span reads LFLG…ELIA.

Belongs to the malic enzymes family. In terms of assembly, homohexamers and homooctamers. Mg(2+) serves as cofactor. It depends on Mn(2+) as a cofactor. In terms of tissue distribution, expressed in leaves, stems, flowers and roots. Particularly present in vasculatures, trichome basal cells and hydatodes.

The protein resides in the cytoplasm. The catalysed reaction is (S)-malate + NADP(+) = pyruvate + CO2 + NADPH. It catalyses the reaction oxaloacetate + H(+) = pyruvate + CO2. With respect to regulation, activated by coenzyme A (CoA), aspartate, succinate and fumarate. Repressed by oxaloacetate, glucose and ATP. The sequence is that of NADP-dependent malic enzyme 2 (NADP-ME2) from Arabidopsis thaliana (Mouse-ear cress).